Consider the following 76-residue polypeptide: Antimicrobial peptide Smp24 (76 aa).

The first 22 residues, 1–22 (MQYKTFLVIFMAYLLVTHEAEA), serve as a signal peptide directing secretion. Residues 47–76 (SKRKRDVEDFFDPYQRDLDLELERLLSQLQ) constitute a propeptide that is removed on maturation.

The protein belongs to the non-disulfide-bridged peptide (NDBP) superfamily. Medium-length antimicrobial peptide (group 3) family. In terms of tissue distribution, expressed by the venom gland.

The protein resides in the secreted. The protein localises to the target cell membrane. Its function is as follows. Peptide that shows antimicrobial activity, moderate cytolysis on eukaryote cells and interference with DNA synthesis. Has potent activity against Gram-positive bacteria and moderate activity against Gram-negative bacteria, as well as moderate activity against fungi. Acts by inducing bacterial membrane disruption. Uses multiple modes of action depending on the membrane lipid composition. Uses a toroidal pore mechanism against the prokaryotic like membrane and forms hexagonal phase non-lamellar structures in eukaryotic-like membrane. Shows activity against B.subtilis (MIC=4 ug/ml), S.epidermidis (MIC=8 ug/ml), S.aureus (MIC=8 ug/ml), E.coli (MIC=64 ug/ml), K.pneumoniae (MIC=128 ug/ml), P.aeruginosa (MIC=256 ug/ml), and C.albicans (MIC=32 ug/ml). Shows moderate hemolysis activity. The protein is Antimicrobial peptide Smp24 of Scorpio palmatus (Israeli golden scorpion).